A 491-amino-acid chain; its full sequence is Ketol-acid reductoisomerase (NADP(+)) (491 aa).

The 194-residue stretch at 15–208 (AQLGKCRFMG…GGHRAGVLES (194 aa)) folds into the KARI N-terminal Rossmann domain. NADP(+) contacts are provided by residues 45–48 (CGAQ), Arg-68, Arg-76, Ser-78, and 108–110 (DKQ). His-132 is a catalytic residue. Gly-158 serves as a coordination point for NADP(+). KARI C-terminal knotted domains are found at residues 209-344 (SFVA…TAPQ) and 345-484 (YEGK…MTDM). Residues Asp-217, Glu-221, Glu-389, and Glu-393 each contribute to the Mg(2+) site. Position 414 (Ser-414) interacts with substrate.

This sequence belongs to the ketol-acid reductoisomerase family. It depends on Mg(2+) as a cofactor.

It catalyses the reaction (2R)-2,3-dihydroxy-3-methylbutanoate + NADP(+) = (2S)-2-acetolactate + NADPH + H(+). The enzyme catalyses (2R,3R)-2,3-dihydroxy-3-methylpentanoate + NADP(+) = (S)-2-ethyl-2-hydroxy-3-oxobutanoate + NADPH + H(+). The protein operates within amino-acid biosynthesis; L-isoleucine biosynthesis; L-isoleucine from 2-oxobutanoate: step 2/4. Its pathway is amino-acid biosynthesis; L-valine biosynthesis; L-valine from pyruvate: step 2/4. Functionally, involved in the biosynthesis of branched-chain amino acids (BCAA). Catalyzes an alkyl-migration followed by a ketol-acid reduction of (S)-2-acetolactate (S2AL) to yield (R)-2,3-dihydroxy-isovalerate. In the isomerase reaction, S2AL is rearranged via a Mg-dependent methyl migration to produce 3-hydroxy-3-methyl-2-ketobutyrate (HMKB). In the reductase reaction, this 2-ketoacid undergoes a metal-dependent reduction by NADPH to yield (R)-2,3-dihydroxy-isovalerate. The sequence is that of Ketol-acid reductoisomerase (NADP(+)) from Escherichia coli O8 (strain IAI1).